Here is a 257-residue protein sequence, read N- to C-terminus: Large ribosomal subunit protein uL2 (257 aa).

Positions 207–231 (VEHPFGGGNHQHIGKPSTIRRDAPA) are disordered.

The protein belongs to the universal ribosomal protein uL2 family. Component of the large ribosomal subunit.

It localises to the cytoplasm. Functionally, component of the large ribosomal subunit. The ribosome is a large ribonucleoprotein complex responsible for the synthesis of proteins in the cell. This Xenopus tropicalis (Western clawed frog) protein is Large ribosomal subunit protein uL2 (rpl8).